A 293-amino-acid chain; its full sequence is Oxidoreductase R2 (293 aa).

The protein belongs to the asaB hydroxylase/desaturase family.

It functions in the pathway secondary metabolite biosynthesis. Its function is as follows. Oxidoreductase; part of the gene cluster that mediates the biosynthesis of squalestatin S1 (SQS1, also known as zaragozic acid A), a heavily oxidized fungal polyketide that offers potent cholesterol lowering activity by targeting squalene synthase (SS). SQS1 is composed of a 2,8-dioxobicyclic[3.2.1]octane-3,4,5-tricarboxyclic acid core that is connected to two lipophilic polyketide arms. These initial steps feature the priming of an unusual benzoic acid starter unit onto the highly reducing polyketide synthase pks2, followed by oxaloacetate extension and product release to generate a tricarboxylic acid containing product. The phenylalanine ammonia lyase (PAL) M7 and the acyl-CoA ligase M9 are involved in transforming phenylalanine into benzoyl-CoA. The citrate synthase-like protein R3 is involved in connecting the C-alpha-carbons of the hexaketide chain and oxaloacetate to afford the tricarboxylic acid unit. The potential hydrolytic enzymes, M8 and M10, are in close proximity to pks2 and may participate in product release. On the other side, the tetraketide arm is synthesized by a the squalestatin tetraketide synthase pks1 and enzymatically esterified to the core in the last biosynthetic step, by the acetyltransferase M4. The biosynthesis of the tetraketide must involve 3 rounds of chain extension. After the first and second rounds methyl-transfer occurs, and in all rounds of extension the ketoreductase and dehydratase are active. The enoyl reductase and C-MeT of pks1 are not active in the final round of extension. The acetyltransferase M4 appears to have a broad substrate selectivity for its acyl CoA substrate, allowing the in vitro synthesis of novel squalestatins. The biosynthesis of SQS1 requires several oxidative steps likely performed by oxidoreductases M1, R1 and R2. Finally, in support of the identification of the cluster as being responsible for SQS1 production, the cluster contains a gene encoding a putative squalene synthase (SS) R6, suggesting a likely mechanism for self-resistance. The polypeptide is Oxidoreductase R2 (Phoma sp. (strain ATCC 20986 / MF5453)).